A 217-amino-acid chain; its full sequence is Probable cutinase 3 (217 aa).

A signal peptide spans 1–17; the sequence is MSLRSLFVAGLATLALA. Cystine bridges form between Cys-39/Cys-118 and Cys-65/Cys-79. The Nucleophile role is filled by Ser-129. Cys-180 and Cys-187 are joined by a disulfide. The active site involves Asp-184. His-197 functions as the Proton donor/acceptor in the catalytic mechanism.

This sequence belongs to the cutinase family.

The protein resides in the secreted. It carries out the reaction cutin + H2O = cutin monomers.. Functionally, catalyzes the hydrolysis of complex carboxylic polyesters found in the cell wall of plants. Degrades cutin, a macromolecule that forms the structure of the plant cuticle. This is Probable cutinase 3 from Aspergillus fumigatus (strain CBS 144.89 / FGSC A1163 / CEA10) (Neosartorya fumigata).